Reading from the N-terminus, the 600-residue chain is Arginine--tRNA ligase (600 aa).

L-arginine-binding positions include 151-153, His162, Tyr332, Asp336, and Gln360; that span reads SPN. A 'HIGH' region motif is present at residues 152 to 162; the sequence is PNIAKEMHIGH.

Belongs to the class-I aminoacyl-tRNA synthetase family.

It catalyses the reaction tRNA(Arg) + L-arginine + ATP = L-arginyl-tRNA(Arg) + AMP + diphosphate. This is Arginine--tRNA ligase (RARS) from Acanthamoeba polyphaga mimivirus (APMV).